The sequence spans 298 residues: 4-hydroxy-tetrahydrodipicolinate synthase (298 aa).

Thr-48 contacts pyruvate. Tyr-137 acts as the Proton donor/acceptor in catalysis. Lys-166 serves as the catalytic Schiff-base intermediate with substrate. Pyruvate is bound at residue Ile-207.

The protein belongs to the DapA family. In terms of assembly, homotetramer; dimer of dimers.

The protein resides in the cytoplasm. The enzyme catalyses L-aspartate 4-semialdehyde + pyruvate = (2S,4S)-4-hydroxy-2,3,4,5-tetrahydrodipicolinate + H2O + H(+). It participates in amino-acid biosynthesis; L-lysine biosynthesis via DAP pathway; (S)-tetrahydrodipicolinate from L-aspartate: step 3/4. In terms of biological role, catalyzes the condensation of (S)-aspartate-beta-semialdehyde [(S)-ASA] and pyruvate to 4-hydroxy-tetrahydrodipicolinate (HTPA). The sequence is that of 4-hydroxy-tetrahydrodipicolinate synthase from Campylobacter hominis (strain ATCC BAA-381 / DSM 21671 / CCUG 45161 / LMG 19568 / NCTC 13146 / CH001A).